We begin with the raw amino-acid sequence, 433 residues long: Chaperone SurA (433 aa).

The N-terminal stretch at 1–28 (MTAITRITLTGALLAAALLLAALQPARA) is a signal peptide. 2 PpiC domains span residues 174 to 277 (NQEY…KLMD) and 286 to 386 (VTET…QVTD).

The protein localises to the periplasm. It catalyses the reaction [protein]-peptidylproline (omega=180) = [protein]-peptidylproline (omega=0). In terms of biological role, chaperone involved in the correct folding and assembly of outer membrane proteins. Recognizes specific patterns of aromatic residues and the orientation of their side chains, which are found more frequently in integral outer membrane proteins. May act in both early periplasmic and late outer membrane-associated steps of protein maturation. This Alkalilimnicola ehrlichii (strain ATCC BAA-1101 / DSM 17681 / MLHE-1) protein is Chaperone SurA.